The sequence spans 663 residues: Transketolase 2 (663 aa).

Histidine 25 provides a ligand contact to substrate. Thiamine diphosphate is bound by residues histidine 65 and 113-115 (GPL). Mg(2+) is bound at residue aspartate 154. Residues glycine 155 and asparagine 184 each contribute to the thiamine diphosphate site. Residues asparagine 184 and isoleucine 186 each coordinate Mg(2+). 3 residues coordinate substrate: histidine 259, arginine 356, and serine 383. Histidine 259 serves as a coordination point for thiamine diphosphate. The Proton donor role is filled by glutamate 410. Position 436 (phenylalanine 436) interacts with thiamine diphosphate. Substrate contacts are provided by histidine 460, aspartate 468, and arginine 519.

The protein belongs to the transketolase family. As to quaternary structure, homodimer. Mg(2+) is required as a cofactor. The cofactor is Ca(2+). It depends on Mn(2+) as a cofactor. Requires Co(2+) as cofactor. Thiamine diphosphate serves as cofactor.

The enzyme catalyses D-sedoheptulose 7-phosphate + D-glyceraldehyde 3-phosphate = aldehydo-D-ribose 5-phosphate + D-xylulose 5-phosphate. Functionally, catalyzes the transfer of a two-carbon ketol group from a ketose donor to an aldose acceptor, via a covalent intermediate with the cofactor thiamine pyrophosphate. This is Transketolase 2 (tkt2) from Vibrio vulnificus (strain CMCP6).